The following is a 463-amino-acid chain: Glutamate--tRNA ligase (463 aa).

The 'HIGH' region motif lies at 8 to 18; it reads PSPTGYLHIGG. Residues 236–240 carry the 'KMSKS' region motif; that stretch reads RLSKR. Lys239 provides a ligand contact to ATP.

It belongs to the class-I aminoacyl-tRNA synthetase family. Glutamate--tRNA ligase type 1 subfamily. Monomer.

It is found in the cytoplasm. The enzyme catalyses tRNA(Glu) + L-glutamate + ATP = L-glutamyl-tRNA(Glu) + AMP + diphosphate. Catalyzes the attachment of glutamate to tRNA(Glu) in a two-step reaction: glutamate is first activated by ATP to form Glu-AMP and then transferred to the acceptor end of tRNA(Glu). The protein is Glutamate--tRNA ligase of Nitrosomonas europaea (strain ATCC 19718 / CIP 103999 / KCTC 2705 / NBRC 14298).